Reading from the N-terminus, the 431-residue chain is Galactose-3-O-sulfotransferase 3 (431 aa).

The Cytoplasmic segment spans residues 1-19 (MPPILQRLQQSTKMMSHRK). The helical; Signal-anchor for type II membrane protein transmembrane segment at 20-40 (ILLLVLGCSTVSLLIHQGSQL) threads the bilayer. Residues 41–431 (SWYPKLFPLS…RALPRIPQGT (391 aa)) are Lumenal-facing. Residues asparagine 91, asparagine 110, asparagine 177, and asparagine 302 are each glycosylated (N-linked (GlcNAc...) asparagine). The disordered stretch occupies residues 400–431 (KRRGGVRSRPESVLDNPPPRPIRALPRIPQGT). Low complexity predominate over residues 421 to 431 (IRALPRIPQGT).

This sequence belongs to the galactose-3-O-sulfotransferase family. Requires Mg(2+) as cofactor.

The protein resides in the golgi apparatus. It localises to the golgi stack membrane. It participates in protein modification; carbohydrate sulfation. In terms of biological role, transfers a sulfate to position 3 of non-reducing beta-galactosyl residues in N-glycans and core2-branched O-glycans. Has high activity towards Gal-beta-1,4-GlcNAc, Gal-beta-1,4(Fuc-alpha-1,3)GlcNAc and lower activity towards Gal-beta-1,3(Fuc-alpha-1,4)GlcNAc. In Mus musculus (Mouse), this protein is Galactose-3-O-sulfotransferase 3 (Gal3st3).